The sequence spans 435 residues: 3-phosphoshikimate 1-carboxyvinyltransferase (435 aa).

Residues Lys-23, Ser-24, and Arg-28 each coordinate 3-phosphoshikimate. Residue Lys-23 coordinates phosphoenolpyruvate. Phosphoenolpyruvate-binding residues include Gly-97 and Arg-125. Residues Ser-170, Ser-171, Gln-172, Ser-198, Asp-315, Asn-338, and Lys-342 each coordinate 3-phosphoshikimate. Phosphoenolpyruvate is bound at residue Gln-172. Catalysis depends on Asp-315, which acts as the Proton acceptor. Positions 346, 388, and 413 each coordinate phosphoenolpyruvate.

This sequence belongs to the EPSP synthase family. Monomer.

It localises to the cytoplasm. The catalysed reaction is 3-phosphoshikimate + phosphoenolpyruvate = 5-O-(1-carboxyvinyl)-3-phosphoshikimate + phosphate. It functions in the pathway metabolic intermediate biosynthesis; chorismate biosynthesis; chorismate from D-erythrose 4-phosphate and phosphoenolpyruvate: step 6/7. In terms of biological role, catalyzes the transfer of the enolpyruvyl moiety of phosphoenolpyruvate (PEP) to the 5-hydroxyl of shikimate-3-phosphate (S3P) to produce enolpyruvyl shikimate-3-phosphate and inorganic phosphate. The polypeptide is 3-phosphoshikimate 1-carboxyvinyltransferase (Buchnera aphidicola subsp. Cinara cedri (strain Cc)).